The primary structure comprises 525 residues: uncharacterized protein (525 aa).

The next 6 membrane-spanning stretches (helical) occupy residues 7-29, 34-51, 64-82, 92-114, 121-143, and 148-170; these read FLAT…LGQI, LRFG…VGAL, GLGV…GSTF, LMLA…GRLF, VAGL…ATHG, and LVGY…AIIA. RCK C-terminal domains follow at residues 178-257 and 259-341; these read KDNT…LGHV and ERTL…LFGD. A run of 5 helical transmembrane segments spans residues 351-370, 374-396, 416-438, 443-465, and 502-524; these read ALSL…LMVA, GLQF…GSIH, LGLM…SQAV, LAVI…AAAW, and SAYG…VIVL.

It belongs to the AAE transporter (TC 2.A.81) family.

The protein resides in the cell membrane. This is an uncharacterized protein from Cutibacterium acnes (strain DSM 16379 / KPA171202) (Propionibacterium acnes).